The following is a 310-amino-acid chain: Olfactory receptor 1496 (310 aa).

The Extracellular segment spans residues 1-23; the sequence is MNNQTFITQFLLLGLPIPEEHQH. A glycan (N-linked (GlcNAc...) asparagine) is linked at Asn3. The helical transmembrane segment at 24–48 threads the bilayer; sequence LFYALFLVMYLTTILGNLLIIVLVQ. Residues 49–55 lie on the Cytoplasmic side of the membrane; that stretch reads LDSQLHT. The helical transmembrane segment at 56 to 77 threads the bilayer; the sequence is PMYLFLSNLSFSDLCFSSVTMP. Topologically, residues 78–98 are extracellular; sequence KLLQNMRSQDTSIPYGGCLAQ. Cys95 and Cys187 are oxidised to a cystine. Residues 99–118 form a helical membrane-spanning segment; it reads TYFFMVFGDMESFLLVAMAY. The Cytoplasmic segment spans residues 119-137; that stretch reads DRYVAICFPLHYTSIMSPK. The chain crosses the membrane as a helical span at residues 138-156; the sequence is LCTCLVLLLWMLTTSHAMM. At 157 to 194 the chain is on the extracellular side; it reads HTLLAARLSFCENNVVLNFFCDLFVLLKLACSDTYINE. Residues 195 to 217 form a helical membrane-spanning segment; the sequence is LMIFIMSTLLIIIPFFLIVMSYA. The Cytoplasmic portion of the chain corresponds to 218–234; that stretch reads RIISSILKVPSTQGICK. The chain crosses the membrane as a helical span at residues 235–258; it reads VFSTCGSHLSVVSLFYGTIIGLYL. Residues 259 to 270 lie on the Extracellular side of the membrane; it reads CPAGNNSTVKEM. The chain crosses the membrane as a helical span at residues 271–290; sequence VMAMMYTVVTPMLNPFIYSL. Over 291-310 the chain is Cytoplasmic; that stretch reads RNRDMKRALIRVICSMKITL.

Belongs to the G-protein coupled receptor 1 family. Olfactory epithelium.

It is found in the cell membrane. Odorant receptor. The sequence is that of Olfactory receptor 1496 (Olr1496) from Rattus norvegicus (Rat).